We begin with the raw amino-acid sequence, 122 residues long: Small ribosomal subunit protein uS13 (122 aa).

A disordered region spans residues 95 to 122 (GLPVRGQRTHTNARTRKGPAKSIAGKKK).

It belongs to the universal ribosomal protein uS13 family. In terms of assembly, part of the 30S ribosomal subunit. Forms a loose heterodimer with protein S19. Forms two bridges to the 50S subunit in the 70S ribosome.

Functionally, located at the top of the head of the 30S subunit, it contacts several helices of the 16S rRNA. In the 70S ribosome it contacts the 23S rRNA (bridge B1a) and protein L5 of the 50S subunit (bridge B1b), connecting the 2 subunits; these bridges are implicated in subunit movement. Contacts the tRNAs in the A and P-sites. This Nitrobacter hamburgensis (strain DSM 10229 / NCIMB 13809 / X14) protein is Small ribosomal subunit protein uS13.